The following is a 357-amino-acid chain: MEVVEVLHMNGGNGDSSYANNSLVQQKVILMTKPITEQAMIDLYSSLFPETLCIADLGCSLGANTFLVVSQIVKIVEKERKKHGFKSPEFYFHFNDLPGNDFNTLFQSLGAFQEDLRKHIGESFGPCFFSGVPGSFYTRLFPSKSLHFVYSSYSLMWLSQVPNGIENNKGNIYMARTSPLSVIKAYYKQYEIDFSNFLKYRSEELMKGGKMVLTLLGRESEDPTSKECCYIWELLAMALNELVKEGLIKEEKVDAFNIPQYTPSPAEVKYLVEKEGSFTINRLETSRVHWNASNNVKNGGYNVSRCMRAVAEPLLVSHFDKELMDLVFHKYEEIISDCMSKEKTEFINVIVSLTKIN.

Residue Y18 participates in S-adenosyl-L-homocysteine binding. Q25 provides a ligand contact to benzoate. The S-adenosyl-L-homocysteine site is built by C59, N64, D96, L97, S135, and F136. W157 is a binding site for benzoate. Mg(2+)-binding residues include N168, D254, F256, and N257. Q260 is a benzoate binding site.

This sequence belongs to the methyltransferase superfamily. Type-7 methyltransferase family.

It carries out the reaction benzoate + S-adenosyl-L-methionine = methyl benzoate + S-adenosyl-L-homocysteine. Its pathway is aromatic compound metabolism. Its function is as follows. Converts benzoic acid into the volatile ester methyl benzoates. This scent, mostly produced in a rhythmical, diurnal manner, attracts the pollinators. In Petunia hybrida (Petunia), this protein is S-adenosyl-L-methionine:benzoic acid/salicylic acid carboxyl methyltransferase 3.